The chain runs to 185 residues: Ribosome-recycling factor (185 aa).

The protein belongs to the RRF family.

It is found in the cytoplasm. In terms of biological role, responsible for the release of ribosomes from messenger RNA at the termination of protein biosynthesis. May increase the efficiency of translation by recycling ribosomes from one round of translation to another. The protein is Ribosome-recycling factor of Actinobacillus succinogenes (strain ATCC 55618 / DSM 22257 / CCUG 43843 / 130Z).